Reading from the N-terminus, the 437-residue chain is Homogentisate 1,2-dioxygenase (437 aa).

The disordered stretch occupies residues 15–34; sequence NEHATSDPRVPDALPVGQNS. H336, E342, and H372 together coordinate Fe cation.

Belongs to the homogentisate dioxygenase family. The cofactor is Fe cation. In terms of tissue distribution, expressed in the hypodermis and intestine.

It catalyses the reaction homogentisate + O2 = 4-maleylacetoacetate + H(+). It participates in amino-acid degradation; L-phenylalanine degradation; acetoacetate and fumarate from L-phenylalanine: step 4/6. Functionally, plays a role in the tyrosine degradation pathway. The protein is Homogentisate 1,2-dioxygenase of Caenorhabditis elegans.